The following is a 583-amino-acid chain: Phosphoglucomutase, cytoplasmic 1 (583 aa).

Residues Arg25 and Ser124 each coordinate alpha-D-glucose 1,6-bisphosphate. Catalysis depends on Ser124, which acts as the Phosphoserine intermediate. Ser124, Asp300, Asp302, and Asp304 together coordinate Mg(2+). Ser124 is modified (phosphoserine). Asp304, Arg305, Thr368, Glu387, Ser389, and Lys400 together coordinate alpha-D-glucose 1,6-bisphosphate.

This sequence belongs to the phosphohexose mutase family. In terms of assembly, monomer. It depends on Mg(2+) as a cofactor. Autophosphorylated. Mostly expressed in roots and coleoptiles, and, to a lower extent, in leaves, pollen and developing seeds.

The protein localises to the cytoplasm. The catalysed reaction is alpha-D-glucose 1-phosphate = alpha-D-glucose 6-phosphate. The enzyme catalyses O-phospho-L-seryl-[protein] + alpha-D-glucose 1-phosphate = alpha-D-glucose 1,6-bisphosphate + L-seryl-[protein]. It carries out the reaction alpha-D-glucose 1,6-bisphosphate + L-seryl-[protein] = O-phospho-L-seryl-[protein] + alpha-D-glucose 6-phosphate. Functionally, catalyzes the reversible isomerization of alpha-D-glucose 1-phosphate to alpha-D-glucose 6-phosphate. The mechanism proceeds via the intermediate compound alpha-D-glucose 1,6-bisphosphate. This enzyme participates in both the breakdown and synthesis of glucose. The sequence is that of Phosphoglucomutase, cytoplasmic 1 from Zea mays (Maize).